Here is a 286-residue protein sequence, read N- to C-terminus: MKITVPATSANIGPGFDSVGVAVSKYLTIEVLEPADVWFIEHDLGDIPSDENNLLISTALQVKSDLQPHKLVMASDIPLARGLGSSSSVIVAGIELANQLADLKLSDDDKLDIATKIEGHPDNVAPAIFGNLVVASYVDEHVNSIVTEFPECAFVAFIPSYELKTSESRGVLPSDLSYKDAVAASSIANVAIAALFAGDLVKAGRAIQGDMFHERYRQKLVKEFVTIKELSGQYGAYATYLSGAGPTVMTLTPNDQAEALKTAIDGIGLDGETLILSVDKGGVVVD.

Residue 78–88 (PLARGLGSSSS) participates in ATP binding.

This sequence belongs to the GHMP kinase family. Homoserine kinase subfamily.

The protein resides in the cytoplasm. The enzyme catalyses L-homoserine + ATP = O-phospho-L-homoserine + ADP + H(+). It functions in the pathway amino-acid biosynthesis; L-threonine biosynthesis; L-threonine from L-aspartate: step 4/5. In terms of biological role, catalyzes the ATP-dependent phosphorylation of L-homoserine to L-homoserine phosphate. The protein is Homoserine kinase of Streptococcus thermophilus (strain CNRZ 1066).